Here is a 166-residue protein sequence, read N- to C-terminus: Endoribonuclease YbeY (166 aa).

Residues H132, H136, and H142 each coordinate Zn(2+).

Belongs to the endoribonuclease YbeY family. It depends on Zn(2+) as a cofactor.

The protein localises to the cytoplasm. Single strand-specific metallo-endoribonuclease involved in late-stage 70S ribosome quality control and in maturation of the 3' terminus of the 16S rRNA. This Clostridium acetobutylicum (strain ATCC 824 / DSM 792 / JCM 1419 / IAM 19013 / LMG 5710 / NBRC 13948 / NRRL B-527 / VKM B-1787 / 2291 / W) protein is Endoribonuclease YbeY.